The sequence spans 475 residues: Cytochrome c-552 (475 aa).

The signal sequence occupies residues 1–29 (MSIKHWMSAPIAVATLFASQLLLAGSVLA). Positions 38 to 57 (PRNDAFEQKHPDQYHSWKAT) are disordered. A heme c-binding site is contributed by His-92. Residues Cys-120, Cys-123, and Lys-124 each contribute to the heme site. Heme c contacts are provided by Cys-158, Cys-161, His-162, Cys-207, Cys-210, and His-211. Ca(2+) is bound by residues Glu-213, Tyr-214, Lys-259, and Gln-261. Residue Tyr-214 participates in substrate binding. Residue His-262 participates in substrate binding. Residues His-273, Cys-280, Cys-283, His-284, His-299, Cys-312, Cys-315, His-316, and His-391 each contribute to the heme c site.

This sequence belongs to the cytochrome c-552 family. It depends on Ca(2+) as a cofactor. The cofactor is heme c.

The protein resides in the periplasm. It catalyses the reaction 6 Fe(III)-[cytochrome c] + NH4(+) + 2 H2O = 6 Fe(II)-[cytochrome c] + nitrite + 8 H(+). It functions in the pathway nitrogen metabolism; nitrate reduction (assimilation). Catalyzes the reduction of nitrite to ammonia, consuming six electrons in the process. The protein is Cytochrome c-552 of Vibrio parahaemolyticus serotype O3:K6 (strain RIMD 2210633).